Reading from the N-terminus, the 319-residue chain is Protein sprouty homolog 1 (319 aa).

Position 1 is an N-acetylmethionine (Met-1). Residues 54–160 (TEGPSVVKRP…ERAIRTQPKQ (107 aa)) are disordered. Basic and acidic residues predominate over residues 69-79 (PRQEKHERTHE). Low complexity predominate over residues 112-131 (SRSTSTGSAASSGSNSSASS). Positions 183 to 295 (QCGKCKCGEC…CYDWIHRPGC (113 aa)) constitute an SPR domain.

Belongs to the sprouty family. In terms of assembly, forms heterodimers with SPRY2. Interacts with TESK1. Interacts with CAV1 (via C-terminus).

Its subcellular location is the cytoplasm. The protein localises to the membrane. In terms of biological role, inhibits fibroblast growth factor (FGF)-induced retinal lens fiber differentiation, probably by inhibiting FGF-mediated phosphorylation of ERK1/2. Inhibits TGFB-induced epithelial-to-mesenchymal transition in lens epithelial cells. This Cervus elaphus (Red deer) protein is Protein sprouty homolog 1 (SPRY1).